The chain runs to 172 residues: Adenine phosphoribosyltransferase (172 aa).

Belongs to the purine/pyrimidine phosphoribosyltransferase family. Homodimer.

It is found in the cytoplasm. It catalyses the reaction AMP + diphosphate = 5-phospho-alpha-D-ribose 1-diphosphate + adenine. Its pathway is purine metabolism; AMP biosynthesis via salvage pathway; AMP from adenine: step 1/1. Functionally, catalyzes a salvage reaction resulting in the formation of AMP, that is energically less costly than de novo synthesis. The chain is Adenine phosphoribosyltransferase from Prochlorococcus marinus (strain MIT 9215).